The chain runs to 383 residues: Caspase a (383 aa).

A propeptide spanning residues 1–142 (MAKSIKDHLQ…ETYEIKDKSV (142 aa)) is cleaved from the precursor. One can recognise a Pyrin domain in the interval 8–81 (HLQDALSNIG…RGIKCNAVAE (74 aa)). Positions 87–106 (TGQGGVSQPEPPVPEPIPKD) are disordered. Active-site residues include H220 and C270. A propeptide spanning residues 275–296 (HGRVWASDGEPDEPIEIEDDDF) is cleaved from the precursor.

The protein belongs to the peptidase C14A family. As to quaternary structure, heterotetramer that consists of two anti-parallel arranged heterodimers, each one formed by a 20 kDa (p20) and a 10 kDa (p10) subunit. Interacts (via pyrin domain) with pycard (via pyrin domain). Interacts with caspb. Component of NLRP1 inflammasomes. Inflammasomes are supramolecular complexes that assemble in the cytosol in response to pathogens and other damage-associated signals and play critical roles in innate immunity and inflammation. The NLRP1 inflammasome is composed of the signal sensor nlrp1, and the adapter pycard (asc), which recruit effector pro-inflammatory caspases caspa and/or caspb. The interaction between nlrp1 and pycard is required for the sequential recruitment of caspa and then caspb. Caspa is preferentially recruited first and this causes the cleavage of pro-il1b into the midformed il1b. This is followed by the recruitment of caspb, which is activated and cleaves the midformed il1b resulting in il1b maturation. Interacts with caiap. The two subunits are derived from the precursor sequence by an autocatalytic mechanism.

Its subcellular location is the inflammasome. The protein localises to the cytoplasm. The enzyme catalyses Strict requirement for an Asp residue at position P1 and has a preferred cleavage sequence of Tyr-Val-Ala-Asp-|-.. Functionally, thiol protease which cleaves IL-1 beta (il1b), releasing the mature cytokine which is involved in a variety of inflammatory processes, and mediates apoptosis. Component of the NLRP1 inflammasome, which plays a crucial role in innate immunity and inflammation. In response to pathogens and other damage-associated signals, recruited to the NLRP1 inflammasome in its precursor form. Its subsequent activation causes the cleavage of pro-il1b into the midformed il1b, which then evetually leads to il1b maturation and secretion in the extracellular milieu. Required for the development of the cartilaginous pharyngeal skeleton. The protein is Caspase a of Danio rerio (Zebrafish).